We begin with the raw amino-acid sequence, 272 residues long: Small ribosomal subunit protein uS2 (272 aa).

Residues E224–Q233 are compositionally biased toward basic and acidic residues. The interval E224–E272 is disordered. The span at E256–E272 shows a compositional bias: acidic residues.

Belongs to the universal ribosomal protein uS2 family.

This Corynebacterium glutamicum (strain ATCC 13032 / DSM 20300 / JCM 1318 / BCRC 11384 / CCUG 27702 / LMG 3730 / NBRC 12168 / NCIMB 10025 / NRRL B-2784 / 534) protein is Small ribosomal subunit protein uS2.